Here is an 88-residue protein sequence, read N- to C-terminus: Apolipoprotein C-I (88 aa).

Residues M1–A26 form the signal peptide.

This sequence belongs to the apolipoprotein C1 family.

It is found in the secreted. Inhibitor of lipoprotein binding to the low density lipoprotein (LDL) receptor, LDL receptor-related protein, and very low density lipoprotein (VLDL) receptor. Associates with high density lipoproteins (HDL) and the triacylglycerol-rich lipoproteins in the plasma and makes up about 10% of the protein of the VLDL and 2% of that of HDL. Appears to interfere directly with fatty acid uptake and is also the major plasma inhibitor of cholesteryl ester transfer protein (CETP). Modulates the interaction of APOE with beta-migrating VLDL and inhibits binding of beta-VLDL to the LDL receptor-related protein. Binds free fatty acids and reduces their intracellular esterification. In Neotoma lepida (Desert woodrat), this protein is Apolipoprotein C-I (Apoc1).